Here is a 140-residue protein sequence, read N- to C-terminus: Small ribosomal subunit protein uS12 (140 aa).

Aspartate 102 is subject to 3-methylthioaspartic acid.

Belongs to the universal ribosomal protein uS12 family. In terms of assembly, part of the 30S ribosomal subunit. Contacts proteins S8 and S17. May interact with IF1 in the 30S initiation complex.

With S4 and S5 plays an important role in translational accuracy. Functionally, interacts with and stabilizes bases of the 16S rRNA that are involved in tRNA selection in the A site and with the mRNA backbone. Located at the interface of the 30S and 50S subunits, it traverses the body of the 30S subunit contacting proteins on the other side and probably holding the rRNA structure together. The combined cluster of proteins S8, S12 and S17 appears to hold together the shoulder and platform of the 30S subunit. This Bacillus cytotoxicus (strain DSM 22905 / CIP 110041 / 391-98 / NVH 391-98) protein is Small ribosomal subunit protein uS12.